The following is a 132-amino-acid chain: Large ribosomal subunit protein eL8 (132 aa).

Lysine 8 carries the N6-acetyllysine; alternate modification. Lysine 8 participates in a covalent cross-link: Glycyl lysine isopeptide (Lys-Gly) (interchain with G-Cter in SUMO2); alternate. A Glycyl lysine isopeptide (Lys-Gly) (interchain with G-Cter in SUMO2) cross-link involves residue lysine 36. Lysine 128 carries the N6-acetyllysine modification.

The protein belongs to the eukaryotic ribosomal protein eL8 family. Component of the large ribosomal subunit. Interacts with CRY1. Interacts with DICER1, AGO2, TARBP2, MOV10 and EIF6; they form a large RNA-induced silencing complex (RISC).

The protein localises to the cytoplasm. Component of the large ribosomal subunit. The ribosome is a large ribonucleoprotein complex responsible for the synthesis of proteins in the cell. The chain is Large ribosomal subunit protein eL8 (RPL7A) from Sus scrofa (Pig).